We begin with the raw amino-acid sequence, 867 residues long: Schizokinen transporter SchT (867 aa).

The segment at 40–62 (HPGKTQEAPSPTQLNTQSPAPNA) is disordered. Positions 46–62 (EAPSPTQLNTQSPAPNA) are enriched in polar residues. The short motif at 185-192 (IELVVTAT) is the TonB box element. One can recognise a TBDR plug domain in the interval 197-307 (PIQNVPRSIT…TGGVINIITR (111 aa)). Residues 313-867 (KLTSRTEVGV…TLSIKYSFDW (555 aa)) enclose the TBDR beta-barrel domain. A TonB C-terminal box motif is present at residues 850–867 (AYAAARGRTLSIKYSFDW).

It belongs to the TonB-dependent receptor family.

The protein localises to the cell outer membrane. Involved in the TonB-dependent uptake of iron in complex with schizokinen, a dihydroxamate-type siderophore. The chain is Schizokinen transporter SchT from Nostoc sp. (strain PCC 7120 / SAG 25.82 / UTEX 2576).